The primary structure comprises 36 residues: Toxin Bcg III 29.21 (36 aa).

A disulfide bridge links Cys-6 with Cys-31.

Its subcellular location is the secreted. It is found in the nematocyst. The protein is Toxin Bcg III 29.21 of Bunodosoma cangicum (Sea anemone).